The following is a 122-amino-acid chain: Large ribosomal subunit protein uL14 (122 aa).

Belongs to the universal ribosomal protein uL14 family. As to quaternary structure, part of the 50S ribosomal subunit. Forms a cluster with proteins L3 and L19. In the 70S ribosome, L14 and L19 interact and together make contacts with the 16S rRNA in bridges B5 and B8.

Its function is as follows. Binds to 23S rRNA. Forms part of two intersubunit bridges in the 70S ribosome. The protein is Large ribosomal subunit protein uL14 of Bacillus licheniformis (strain ATCC 14580 / DSM 13 / JCM 2505 / CCUG 7422 / NBRC 12200 / NCIMB 9375 / NCTC 10341 / NRRL NRS-1264 / Gibson 46).